Reading from the N-terminus, the 178-residue chain is Probable chorismate pyruvate-lyase (178 aa).

Positions 67, 105, and 164 each coordinate substrate.

This sequence belongs to the UbiC family.

It is found in the cytoplasm. It catalyses the reaction chorismate = 4-hydroxybenzoate + pyruvate. The protein operates within cofactor biosynthesis; ubiquinone biosynthesis. Its function is as follows. Removes the pyruvyl group from chorismate, with concomitant aromatization of the ring, to provide 4-hydroxybenzoate (4HB) for the ubiquinone pathway. The chain is Probable chorismate pyruvate-lyase from Methylobacillus flagellatus (strain ATCC 51484 / DSM 6875 / VKM B-1610 / KT).